Here is a 144-residue protein sequence, read N- to C-terminus: Austinoid biosynthesis clusters protein S (144 aa).

This sequence belongs to the trt14 isomerase family. In terms of assembly, homodimer.

It participates in secondary metabolite biosynthesis; terpenoid biosynthesis. Part of the gene cluster B that mediates the biosynthesis of the fungal meroterpenoid acetoxydehydroaustin. The first step of the pathway is the synthesis of 3,5-dimethylorsellinic acid by the polyketide synthase ausA. 3,5-dimethylorsellinic acid is then prenylated by the polyprenyl transferase ausN. Further epoxidation by the FAD-dependent monooxygenase ausM and cyclization by the probable terpene cyclase ausL lead to the formation of protoaustinoid A. Protoaustinoid A is then oxidized to spiro-lactone preaustinoid A3 by the combined action of the FAD-binding monooxygenases ausB and ausC, and the dioxygenase ausE. Acid-catalyzed keto-rearrangement and ring contraction of the tetraketide portion of preaustinoid A3 by ausJ lead to the formation of preaustinoid A4. The aldo-keto reductase ausK, with the help of ausH, is involved in the next step by transforming preaustinoid A4 into isoaustinone which is in turn hydroxylated by the P450 monooxygenase ausI to form austinolide. The cytochrome P450 monooxygenase ausG then modifies austinolide to austinol. Austinol is further acetylated to austin by the O-acetyltransferase ausP, which spontaneously changes to dehydroaustin. The cytochrome P450 monooxygenase then converts dehydroaustin is into 7-dehydrodehydroaustin. The hydroxylation catalyzed by ausR permits the second O-acetyltransferase ausQ to add an additional acetyl group to the molecule, leading to the formation of acetoxydehydroaustin. Due to genetic rearrangements of the clusters and the subsequent loss of some enzymes, the end product of the Penicillium brasilianum austinoid biosynthesis clusters is acetoxydehydroaustin. AusS is necessary for austinoids production and may play a possible function as a regulator. This is Austinoid biosynthesis clusters protein S from Penicillium brasilianum.